A 67-amino-acid chain; its full sequence is MPKLKTKSGAKKRFVPKKSGKVKFRRAGVRHLATFGKTKKQKRHLRGTDHLTPMDEKKIKECFPYAR.

The interval 1-20 is disordered; that stretch reads MPKLKTKSGAKKRFVPKKSG.

This sequence belongs to the bacterial ribosomal protein bL35 family.

This is Large ribosomal subunit protein bL35 from Anaeromyxobacter dehalogenans (strain 2CP-1 / ATCC BAA-258).